A 285-amino-acid chain; its full sequence is Pantothenate synthetase (285 aa).

30–37 is an ATP binding site; that stretch reads MGNLHDGH. The Proton donor role is filled by His37. Gln61 provides a ligand contact to (R)-pantoate. A beta-alanine-binding site is contributed by Gln61. 149–152 contacts ATP; the sequence is GEKD. (R)-pantoate is bound at residue Gln155. ATP contacts are provided by residues Ile178 and 186–189; that span reads FSSR.

It belongs to the pantothenate synthetase family. In terms of assembly, homodimer.

The protein resides in the cytoplasm. The catalysed reaction is (R)-pantoate + beta-alanine + ATP = (R)-pantothenate + AMP + diphosphate + H(+). Its pathway is cofactor biosynthesis; (R)-pantothenate biosynthesis; (R)-pantothenate from (R)-pantoate and beta-alanine: step 1/1. Functionally, catalyzes the condensation of pantoate with beta-alanine in an ATP-dependent reaction via a pantoyl-adenylate intermediate. This Buchnera aphidicola subsp. Schizaphis graminum (strain Sg) protein is Pantothenate synthetase.